Reading from the N-terminus, the 555-residue chain is Probable apyrase 6 (555 aa).

The span at 1 to 10 shows a compositional bias: basic residues; sequence MRRSHARSRV. Residues 1–45 are disordered; sequence MRRSHARSRVKNSSSSKSDMDPIKFQIRSGNRAPSSSSTYTLTKP. Topologically, residues 1 to 55 are cytoplasmic; it reads MRRSHARSRVKNSSSSKSDMDPIKFQIRSGNRAPSSSSTYTLTKPNSKHAKSNLL. The span at 28–45 shows a compositional bias: polar residues; sequence RSGNRAPSSSSTYTLTKP. The chain crosses the membrane as a helical span at residues 56–76; it reads LTVGSISVVLGVLFLCYSILF. Topologically, residues 77–512 are extracellular; the sequence is SGGNLRGSLR…HALFSNHPKT (436 aa). 89 to 99 lines the ATP pocket; sequence VVIDGGSTGTR. Residue glutamate 212 is the Proton acceptor of the active site. 236–246 is a binding site for ATP; the sequence is GIVELGGASAQ. N-linked (GlcNAc...) asparagine glycans are attached at residues asparagine 267 and asparagine 348. A helical transmembrane segment spans residues 513-533; it reads LHYLIGIPILMTVLVYLVTKW. Residues 534-555 lie on the Cytoplasmic side of the membrane; it reads RKPQLKTIYDLEKGRYIVTRIR.

The protein belongs to the GDA1/CD39 NTPase family. Requires Ca(2+) as cofactor. In terms of tissue distribution, detected in mature pollen grains (at the protein level). Also expressed in the veins and hydathode regions of rosette leaves.

It is found in the cytoplasmic vesicle membrane. The catalysed reaction is a ribonucleoside 5'-triphosphate + 2 H2O = a ribonucleoside 5'-phosphate + 2 phosphate + 2 H(+). In terms of biological role, catalyzes the hydrolysis of phosphoanhydride bonds of nucleoside tri- and di-phosphates. Involved in the regulation of pollen and anther development. This Arabidopsis thaliana (Mouse-ear cress) protein is Probable apyrase 6 (APY6).